The sequence spans 61 residues: Fasciculin-2 (61 aa).

4 disulfides stabilise this stretch: C3–C22, C17–C39, C41–C52, and C53–C59.

Belongs to the three-finger toxin family. Short-chain subfamily. Acn-esterase inhibitor sub-subfamily. Expressed by the venom gland.

Its subcellular location is the secreted. Functionally, interferes with neuromuscular transmission by inhibiting the enzyme acetylcholinesterase (AChE) present at the neuromuscular junction. It selectively binds and inhibits with a 1:1 stoichiometry the mammalian and electric fish AChE at picomolar concentrations. It is highly specific for the peripheral site of AChE and blocks the entry of acetylcholine into the active site of the enzyme (through the Met-33 residue), thereby preventing its breakdown. It has been called fasciculin since after injection into mice it causes severe, generalized and long-lasting (5-7 hours) fasciculations. This is Fasciculin-2 from Dendroaspis angusticeps (Eastern green mamba).